The primary structure comprises 376 residues: Glutamate 5-kinase (376 aa).

Residue K17 coordinates ATP. The substrate site is built by S57, D144, and N156. An ATP-binding site is contributed by 176-177 (TD). The PUA domain occupies 283–361 (KGQLVLDEGA…SEINQLLGYS (79 aa)).

The protein belongs to the glutamate 5-kinase family.

It localises to the cytoplasm. The catalysed reaction is L-glutamate + ATP = L-glutamyl 5-phosphate + ADP. Its pathway is amino-acid biosynthesis; L-proline biosynthesis; L-glutamate 5-semialdehyde from L-glutamate: step 1/2. Functionally, catalyzes the transfer of a phosphate group to glutamate to form L-glutamate 5-phosphate. This chain is Glutamate 5-kinase, found in Hydrogenovibrio crunogenus (strain DSM 25203 / XCL-2) (Thiomicrospira crunogena).